The sequence spans 140 residues: General stress protein 26 (140 aa).

The chain is General stress protein 26 (ydaG) from Bacillus subtilis (strain 168).